The chain runs to 472 residues: Meiotic spindle formation protein mei-1 (472 aa).

The disordered stretch occupies residues 83-161; that stretch reads HEAMTRQSGS…TQGILPQNSA (79 aa). Serine 92 carries the post-translational modification Phosphoserine; by mbk-2. 2 stretches are compositionally biased toward polar residues: residues 134-143 and 150-161; these read KSTSSMSTNP and NPTQGILPQNSA. ATP is bound by residues 233–240 and 351–352; these read GPPGTGKT and RR.

This sequence belongs to the AAA ATPase family. Katanin p60 subunit A1 subfamily. In terms of assembly, homohexamer; ATP hydrolysis initiates a cycle between an open spiral and a closed ring conformation which is probably involved in pulling tubulin dimers out from microtubules. Interacts with mei-2, which may serve as a targeting subunit. Interacts with mel-26, which targets mei-1 for ubiquitin mediated proteolysis. Interacts with phosphatase pph-4.1. Post-translationally, phosphorylated. Phosphorylation by mbk-2 is required for its rapid degradation following meiosis II. Likely dephosphorylated by the PP4 complex composed of catalytic subunit pph-4.1 and regulatory subunit ppfr-1. Polyubiquitination targets the protein for rapid degradation via the ubiquitin system at the end of meiosis. The BTB domain protein mel-26 may serve to specifically target mei-1 for ubiquitination by cul-3 containing complexes. The cul-3 protein is in turn regulated by neddylation by ned-8.

Its subcellular location is the cytoplasm. The protein localises to the cytoskeleton. It is found in the spindle pole. The protein resides in the chromosome. The catalysed reaction is n ATP + n H2O + a microtubule = n ADP + n phosphate + (n+1) alpha/beta tubulin heterodimers.. With respect to regulation, ATPase activity is stimulated by microtubules, which promote homooligomerization. ATP-dependent microtubule severing is stimulated by interaction with mei-2. Functionally, catalytic subunit of a complex which severs microtubules in an ATP-dependent manner. Microtubule severing may promote rapid reorganization of cellular microtubule arrays. Required specifically for meiotic spindle formation in the female germline; the presence of this protein is inimical to the formation of mitotic spindles. In body wall muscles, regulates organization of myosin thick filaments. This Caenorhabditis elegans protein is Meiotic spindle formation protein mei-1.